A 418-amino-acid chain; its full sequence is IQ domain-containing protein C (418 aa).

The region spanning 6–35 (FLRKVSTLQAGFRGFLVRRQFQSLRAEYEA) is the IQ domain. Disordered regions lie at residues 101–142 (QKKT…SVSK), 230–264 (HHAE…KGRE), 280–299 (SQAG…QPFK), 327–355 (AETQ…AGPC), and 376–418 (GSLD…LQWR). Composition is skewed to polar residues over residues 129–142 (KASQ…SVSK) and 249–259 (SVTSAGKTTAG). The stretch at 141 to 176 (SKMENADLGLSQSQQELQEQRNHLAMELLWLQQAIN) forms a coiled coil. The segment covering 390–404 (PPSAGSSGHGNTSEL) has biased composition (polar residues).

This is IQ domain-containing protein C (Iqcc) from Mus musculus (Mouse).